The chain runs to 99 residues: Ubiquitin-related modifier 1 homolog (99 aa).

G99 carries the post-translational modification 1-thioglycine. Residue G99 forms a Glycyl lysine isopeptide (Gly-Lys) (interchain with K-? in acceptor proteins) linkage.

The protein belongs to the URM1 family. Post-translationally, C-terminal thiocarboxylation occurs in 2 steps, it is first acyl-adenylated (-COAMP) via the hesA/moeB/thiF part of the MOCS3 homolog, then thiocarboxylated (-COSH) via the rhodanese domain of the MOCS3 homolog.

It is found in the cytoplasm. It participates in tRNA modification; 5-methoxycarbonylmethyl-2-thiouridine-tRNA biosynthesis. Its function is as follows. Acts as a sulfur carrier required for 2-thiolation of mcm(5)S(2)U at tRNA wobble positions of cytosolic tRNA(Lys), tRNA(Glu) and tRNA(Gln). Serves as sulfur donor in tRNA 2-thiolation reaction by being thiocarboxylated (-COSH) at its C-terminus by MOCS3. The sulfur is then transferred to tRNA to form 2-thiolation of mcm(5)S(2)U. Also acts as a ubiquitin-like protein (UBL) that is covalently conjugated via an isopeptide bond to lysine residues of target proteins. The thiocarboxylated form serves as substrate for conjugation and oxidative stress specifically induces the formation of UBL-protein conjugates. This chain is Ubiquitin-related modifier 1 homolog, found in Chlamydomonas reinhardtii (Chlamydomonas smithii).